A 307-amino-acid polypeptide reads, in one-letter code: Membrane protein insertase YidC 2 (307 aa).

The N-terminal stretch at M1–G23 is a signal peptide. A lipid anchor (N-palmitoyl cysteine) is attached at C24. C24 is lipidated: S-diacylglycerol cysteine. Helical transmembrane passes span L58–L78, L135–F155, V179–V199, T209–L225, and L231–L251. Residues Y263–R307 are disordered. Over residues Y271–Q288 the composition is skewed to polar residues. Residues K293–R307 show a composition bias toward basic residues.

It belongs to the OXA1/ALB3/YidC family. Type 2 subfamily.

Its subcellular location is the cell membrane. In terms of biological role, required for the insertion and/or proper folding and/or complex formation of integral membrane proteins into the membrane. Involved in integration of membrane proteins that insert both dependently and independently of the Sec translocase complex, as well as at least some lipoproteins. The sequence is that of Membrane protein insertase YidC 2 from Streptococcus pyogenes serotype M1.